Here is a 414-residue protein sequence, read N- to C-terminus: Esterase FrsA (414 aa).

The protein belongs to the FrsA family.

The catalysed reaction is a carboxylic ester + H2O = an alcohol + a carboxylate + H(+). Its function is as follows. Catalyzes the hydrolysis of esters. The chain is Esterase FrsA from Enterobacter sp. (strain 638).